Here is a 98-residue protein sequence, read N- to C-terminus: Plastocyanin (98 aa).

The Plastocyanin-like domain maps to 1–98 (DVTVKLGADS…AGMKGTITVQ (98 aa)). 4 residues coordinate Cu cation: H38, C83, H86, and M91.

The protein belongs to the plastocyanin family. It depends on Cu(2+) as a cofactor.

It localises to the plastid. The protein localises to the chloroplast thylakoid membrane. Functionally, participates in electron transfer between P700 and the cytochrome b6-f complex in photosystem I. In Scenedesmus fuscus (Green alga), this protein is Plastocyanin (petE).